The sequence spans 61 residues: Small ribosomal subunit protein uS14 (61 aa).

The Zn(2+) site is built by Cys-24, Cys-27, Cys-40, and Cys-43.

This sequence belongs to the universal ribosomal protein uS14 family. Zinc-binding uS14 subfamily. As to quaternary structure, part of the 30S ribosomal subunit. Contacts proteins S3 and S10. Zn(2+) is required as a cofactor.

Binds 16S rRNA, required for the assembly of 30S particles and may also be responsible for determining the conformation of the 16S rRNA at the A site. This chain is Small ribosomal subunit protein uS14, found in Clostridium kluyveri (strain NBRC 12016).